The chain runs to 471 residues: UDP-glycosyltransferase 71A15 (471 aa).

Residues S282, 348-349, 366-374, and 388-391 each bind UDP-alpha-D-glucose; these read WA, HCGWNSTLE, and YAEQ.

The protein belongs to the UDP-glycosyltransferase family.

In terms of biological role, glycosyltransferase that possesses chalcone and flavonol 2'-O-glycosyltransferase activity. Converts phloretin to phlorizin (phloretin 2'-O-glucoside), a potent antioxidant. Possesses glycosyltransferase activity toward, naringenin, naringenin chalcone, eriodictyol, eriodictyol chalcone, apigenin, luteolin, kaempferol, quercetin, isoliquiritigenin, butein and caffeic acid. Can convert phloretin to phloretin 4'-O-glucoside and phloretin 4-O-glucoside. This is UDP-glycosyltransferase 71A15 from Malus domestica (Apple).